A 466-amino-acid polypeptide reads, in one-letter code: Asparagine--tRNA ligase (466 aa).

This sequence belongs to the class-II aminoacyl-tRNA synthetase family. Homodimer.

It is found in the cytoplasm. The enzyme catalyses tRNA(Asn) + L-asparagine + ATP = L-asparaginyl-tRNA(Asn) + AMP + diphosphate + H(+). The chain is Asparagine--tRNA ligase from Vibrio vulnificus (strain YJ016).